The following is a 122-amino-acid chain: Small ribosomal subunit protein uS13 (122 aa).

The interval 94-122 is disordered; sequence SLPVRGQRTKTNARTRKVHVSRSKNSRGK.

It belongs to the universal ribosomal protein uS13 family. As to quaternary structure, part of the 30S ribosomal subunit. Forms a loose heterodimer with protein S19. Forms two bridges to the 50S subunit in the 70S ribosome.

Located at the top of the head of the 30S subunit, it contacts several helices of the 16S rRNA. In the 70S ribosome it contacts the 23S rRNA (bridge B1a) and protein L5 of the 50S subunit (bridge B1b), connecting the 2 subunits; these bridges are implicated in subunit movement. Contacts the tRNAs in the A and P-sites. The sequence is that of Small ribosomal subunit protein uS13 from Haemophilus influenzae (strain ATCC 51907 / DSM 11121 / KW20 / Rd).